Consider the following 649-residue polypeptide: tRNA-guanine(15) transglycosylase (649 aa).

The active-site Nucleophile is Asp-88. Residues Asp-123 and Ala-194 each coordinate substrate. Positions 280, 282, and 285 each coordinate Zn(2+). Residues 572–647 form the PUA domain; the sequence is KYRVIVDKSV…VAVNIRGGLK (76 aa).

It belongs to the archaeosine tRNA-ribosyltransferase family. Zn(2+) serves as cofactor.

The catalysed reaction is guanosine(15) in tRNA + 7-cyano-7-deazaguanine = 7-cyano-7-carbaguanosine(15) in tRNA + guanine. It participates in tRNA modification; archaeosine-tRNA biosynthesis. Its function is as follows. Exchanges the guanine residue with 7-cyano-7-deazaguanine (preQ0) at position 15 in the dihydrouridine loop (D-loop) of archaeal tRNAs. This chain is tRNA-guanine(15) transglycosylase, found in Methanococcus vannielii (strain ATCC 35089 / DSM 1224 / JCM 13029 / OCM 148 / SB).